A 102-amino-acid chain; its full sequence is Small ribosomal subunit protein uS10 (102 aa).

It belongs to the universal ribosomal protein uS10 family. As to quaternary structure, part of the 30S ribosomal subunit.

Its function is as follows. Involved in the binding of tRNA to the ribosomes. The polypeptide is Small ribosomal subunit protein uS10 (Chlorobium phaeobacteroides (strain BS1)).